Consider the following 158-residue polypeptide: NADH-quinone oxidoreductase subunit B (158 aa).

[4Fe-4S] cluster is bound by residues Cys37, Cys38, Cys102, and Cys132.

This sequence belongs to the complex I 20 kDa subunit family. NDH-1 is composed of 14 different subunits. Subunits NuoB, C, D, E, F, and G constitute the peripheral sector of the complex. [4Fe-4S] cluster serves as cofactor.

The protein resides in the cell inner membrane. The enzyme catalyses a quinone + NADH + 5 H(+)(in) = a quinol + NAD(+) + 4 H(+)(out). Functionally, NDH-1 shuttles electrons from NADH, via FMN and iron-sulfur (Fe-S) centers, to quinones in the respiratory chain. Couples the redox reaction to proton translocation (for every two electrons transferred, four hydrogen ions are translocated across the cytoplasmic membrane), and thus conserves the redox energy in a proton gradient. The chain is NADH-quinone oxidoreductase subunit B from Dechloromonas aromatica (strain RCB).